The sequence spans 276 residues: Large ribosomal subunit protein uL2 (276 aa).

The segment at 223–276 is disordered; the sequence is VVMNPVDHPHGGGEGKSSGGRHPVSPWGKKTRGPKTRNNKVTDRLIIRRRNAKR. Residues 251-260 are compositionally biased toward basic residues; sequence KKTRGPKTRN.

Belongs to the universal ribosomal protein uL2 family. Part of the 50S ribosomal subunit. Forms a bridge to the 30S subunit in the 70S ribosome.

One of the primary rRNA binding proteins. Required for association of the 30S and 50S subunits to form the 70S ribosome, for tRNA binding and peptide bond formation. It has been suggested to have peptidyltransferase activity; this is somewhat controversial. Makes several contacts with the 16S rRNA in the 70S ribosome. The polypeptide is Large ribosomal subunit protein uL2 (Hyphomonas neptunium (strain ATCC 15444)).